The primary structure comprises 252 residues: 3-deoxy-manno-octulosonate cytidylyltransferase (252 aa).

This sequence belongs to the KdsB family.

It localises to the cytoplasm. The catalysed reaction is 3-deoxy-alpha-D-manno-oct-2-ulosonate + CTP = CMP-3-deoxy-beta-D-manno-octulosonate + diphosphate. The protein operates within nucleotide-sugar biosynthesis; CMP-3-deoxy-D-manno-octulosonate biosynthesis; CMP-3-deoxy-D-manno-octulosonate from 3-deoxy-D-manno-octulosonate and CTP: step 1/1. It participates in bacterial outer membrane biogenesis; lipopolysaccharide biosynthesis. In terms of biological role, activates KDO (a required 8-carbon sugar) for incorporation into bacterial lipopolysaccharide in Gram-negative bacteria. In Xylella fastidiosa (strain Temecula1 / ATCC 700964), this protein is 3-deoxy-manno-octulosonate cytidylyltransferase.